A 618-amino-acid chain; its full sequence is 1-aminocyclopropane-1-carboxylate synthase-like protein 1 (618 aa).

Positions 11 to 26 are enriched in low complexity; it reads QGTQTPAAQTTCAPST. Residues 11–54 are disordered; that stretch reads QGTQTPAAQTTCAPSTMSSSSRPPLETLQAQSVSADETPGSALP. A compositionally biased stretch (polar residues) spans 27 to 45; that stretch reads MSSSSRPPLETLQAQSVSA. Residue Glu122 participates in substrate binding. Lys340 bears the N6-(pyridoxal phosphate)lysine mark.

This sequence belongs to the class-I pyridoxal-phosphate-dependent aminotransferase family.

The chain is 1-aminocyclopropane-1-carboxylate synthase-like protein 1 (accs) from Takifugu rubripes (Japanese pufferfish).